The sequence spans 461 residues: Transforming growth factor beta-1-induced transcript 1 protein (461 aa).

N-acetylmethionine is present on M1. A disordered region spans residues 1–87; the sequence is MEDLDALLSD…PFSSSSGVLG (87 aa). A transcription activation region spans residues 1-200; sequence MEDLDALLSD…GSPSPPEPTG (200 aa). The interval 1–240 is interaction with PTK2B/PYK2; sequence MEDLDALLSD…CNKPIAGQVV (240 aa). An LD motif 1 motif is present at residues 3–15; the sequence is DLDALLSDLETTT. Phosphothreonine is present on T33. Residue Y38 is modified to Phosphotyrosine. Over residues 40–52 the composition is skewed to polar residues; sequence HQPQTGSGESSGA. At Y60 the chain carries Phosphotyrosine; by FAK2 and FYN. At S68 the chain carries Phosphoserine. An interaction with PTK2/FAK1 region spans residues 83 to 136; that stretch reads SGVLGTGLCELDRLLQELNATQFNITDEIMSQFPSSKVASGEQKEDQSEDKKRP. An LD motif 2 motif is present at residues 92–104; sequence ELDRLLQELNATQ. Positions 116–152 are disordered; it reads PSSKVASGEQKEDQSEDKKRPSLPSSPSPGLPKASAT. The span at 124-135 shows a compositional bias: basic and acidic residues; it reads EQKEDQSEDKKR. Phosphoserine occurs at positions 137, 140, 141, 143, 164, and 186. An LD motif 3 motif is present at residues 157 to 168; the sequence is ELDRLMASLSDF. Positions 172–205 are disordered; that stretch reads NHLPASGPTQPPVVSSTNEGSPSPPEPTGKGSLD. The segment covering 183-192 has biased composition (polar residues); it reads PVVSSTNEGS. Position 188 is a phosphothreonine (T188). Phosphoserine occurs at positions 192 and 194. The short motif at 203 to 215 is the LD motif 4 element; sequence SLDTMLGLLQSDL. 4 consecutive LIM zinc-binding domains span residues 226–285, 286–343, 344–403, and 404–461; these read GLCG…RFSP, RCGF…QLFA, PRCQ…RRGS, and LCAT…KLFG. S403 is modified (phosphoserine). T407 carries the post-translational modification Phosphothreonine.

It belongs to the paxillin family. In terms of assembly, homooligomer. Interacts with PPARG. Interacts with TRAF4. Interacts with CRIP2. Interacts with HSPB1. Interacts with ILK. Interacts with LIMS1 and LIMS2. Interacts with NCK2. Interacts with NUDT16L1. Interacts with PAK. Interacts with PTPN12. Interacts with TCF3. Interacts with TCF7L2. Interacts with VCL. Interacts (via LD motif 3) with GIT1. Also interacts with GIT2. Forms a complex with ARHGEF7. Interacts with AR/androgen receptor in a ligand-dependent manner. Interacts with CSK. Interacts with PTK2/FAK1 and PTK2B/PYK2. Interacts with SLC6A3 and SLC6A4. Interacts with NR3C1. Interacts with SMAD3. Interacts with MAPK15. Interacts with SRC. Interacts with LYN. Interacts with talin. Interacts (via LIM zinc-binding domain 2) with CBLC (via RING-type zinc finger); the interaction is direct and enhances CBLC E3 ubiquitin-protein ligase activity. Interacts with PARVA. Interacts with PXN. In terms of processing, phosphorylated by gonadotropin-releasing hormone-activated SRC. In terms of tissue distribution, expressed in platelets, smooth muscle and prostate stromal cells (at protein level).

It localises to the cell junction. Its subcellular location is the focal adhesion. It is found in the nucleus matrix. The protein localises to the cytoplasm. The protein resides in the cytoskeleton. Functionally, functions as a molecular adapter coordinating multiple protein-protein interactions at the focal adhesion complex and in the nucleus. Links various intracellular signaling modules to plasma membrane receptors and regulates the Wnt and TGFB signaling pathways. May also regulate SLC6A3 and SLC6A4 targeting to the plasma membrane hence regulating their activity. In the nucleus, functions as a nuclear receptor coactivator regulating glucocorticoid, androgen, mineralocorticoid and progesterone receptor transcriptional activity. May play a role in the processes of cell growth, proliferation, migration, differentiation and senescence. May have a zinc-dependent DNA-binding activity. This Homo sapiens (Human) protein is Transforming growth factor beta-1-induced transcript 1 protein (TGFB1I1).